The chain runs to 428 residues: Glutamate-1-semialdehyde 2,1-aminomutase (428 aa).

Residue K266 is modified to N6-(pyridoxal phosphate)lysine.

The protein belongs to the class-III pyridoxal-phosphate-dependent aminotransferase family. HemL subfamily. Homodimer. Requires pyridoxal 5'-phosphate as cofactor.

The protein localises to the cytoplasm. It catalyses the reaction (S)-4-amino-5-oxopentanoate = 5-aminolevulinate. The protein operates within porphyrin-containing compound metabolism; protoporphyrin-IX biosynthesis; 5-aminolevulinate from L-glutamyl-tRNA(Glu): step 2/2. The sequence is that of Glutamate-1-semialdehyde 2,1-aminomutase from Herminiimonas arsenicoxydans.